Consider the following 363-residue polypeptide: Peptide chain release factor 1 (363 aa).

The residue at position 237 (Gln237) is an N5-methylglutamine.

It belongs to the prokaryotic/mitochondrial release factor family. In terms of processing, methylated by PrmC. Methylation increases the termination efficiency of RF1.

The protein resides in the cytoplasm. Functionally, peptide chain release factor 1 directs the termination of translation in response to the peptide chain termination codons UAG and UAA. The polypeptide is Peptide chain release factor 1 (Marinobacter nauticus (strain ATCC 700491 / DSM 11845 / VT8) (Marinobacter aquaeolei)).